The following is a 717-amino-acid chain: Polyribonucleotide nucleotidyltransferase (717 aa).

Residues D487 and D493 each contribute to the Mg(2+) site. The 60-residue stretch at 554-613 (PKIITMAINPDKIRDVIGPSGKQINKIIEETGVKIDIEQDGTVFISSINQEMNEKAKKII) folds into the KH domain. Residues 623 to 691 (GEIYLGKVKR…KQGRVNLSRK (69 aa)) form the S1 motif domain.

This sequence belongs to the polyribonucleotide nucleotidyltransferase family. The cofactor is Mg(2+).

It is found in the cytoplasm. It catalyses the reaction RNA(n+1) + phosphate = RNA(n) + a ribonucleoside 5'-diphosphate. Functionally, involved in mRNA degradation. Catalyzes the phosphorolysis of single-stranded polyribonucleotides processively in the 3'- to 5'-direction. The polypeptide is Polyribonucleotide nucleotidyltransferase (Bacillus mycoides (strain KBAB4) (Bacillus weihenstephanensis)).